Reading from the N-terminus, the 211-residue chain is Imidazole glycerol phosphate synthase subunit HisH (211 aa).

The Glutamine amidotransferase type-1 domain maps to 3–211; it reads VVAVIDYEMG…VSQVREKIAA (209 aa). Catalysis depends on Cys-81, which acts as the Nucleophile. Residues His-186 and Glu-188 contribute to the active site.

Heterodimer of HisH and HisF.

It localises to the cytoplasm. It catalyses the reaction 5-[(5-phospho-1-deoxy-D-ribulos-1-ylimino)methylamino]-1-(5-phospho-beta-D-ribosyl)imidazole-4-carboxamide + L-glutamine = D-erythro-1-(imidazol-4-yl)glycerol 3-phosphate + 5-amino-1-(5-phospho-beta-D-ribosyl)imidazole-4-carboxamide + L-glutamate + H(+). It carries out the reaction L-glutamine + H2O = L-glutamate + NH4(+). It functions in the pathway amino-acid biosynthesis; L-histidine biosynthesis; L-histidine from 5-phospho-alpha-D-ribose 1-diphosphate: step 5/9. Its function is as follows. IGPS catalyzes the conversion of PRFAR and glutamine to IGP, AICAR and glutamate. The HisH subunit catalyzes the hydrolysis of glutamine to glutamate and ammonia as part of the synthesis of IGP and AICAR. The resulting ammonia molecule is channeled to the active site of HisF. The chain is Imidazole glycerol phosphate synthase subunit HisH from Nostoc sp. (strain PCC 7120 / SAG 25.82 / UTEX 2576).